Reading from the N-terminus, the 399-residue chain is Subtilisin-like protease 4 (399 aa).

A signal peptide spans 1-19 (MVCLKTLSVFLAAFAAADA). Positions 20–118 (RAVFKTQGHK…VEQDQVVRIS (99 aa)) are excised as a propeptide. Positions 38-117 (YIVVMKDGVS…YVEQDQVVRI (80 aa)) constitute an Inhibitor I9 domain. Residues 128–399 (SWGLGRVSHR…NRLLYNGSGQ (272 aa)) enclose the Peptidase S8 domain. Residues Asp-160 and His-191 each act as charge relay system in the active site. Asn-252 and Asn-308 each carry an N-linked (GlcNAc...) asparagine glycan. Catalysis depends on Ser-346, which acts as the Charge relay system. N-linked (GlcNAc...) asparagine glycosylation is present at Asn-395.

The protein belongs to the peptidase S8 family.

It localises to the secreted. Functionally, secreted subtilisin-like serine protease with keratinolytic activity that contributes to pathogenicity. The polypeptide is Subtilisin-like protease 4 (SUB4) (Arthroderma benhamiae (strain ATCC MYA-4681 / CBS 112371) (Trichophyton mentagrophytes)).